Consider the following 159-residue polypeptide: Phosphopantetheine adenylyltransferase (159 aa).

T10 serves as a coordination point for substrate. ATP-binding positions include 10–11 (TF) and H18. Substrate-binding residues include K42, M74, and R88. Residues 89–91 (GLR), E99, and 124–130 (WSFISSS) each bind ATP.

This sequence belongs to the bacterial CoaD family. As to quaternary structure, homohexamer. It depends on Mg(2+) as a cofactor.

It is found in the cytoplasm. The enzyme catalyses (R)-4'-phosphopantetheine + ATP + H(+) = 3'-dephospho-CoA + diphosphate. It participates in cofactor biosynthesis; coenzyme A biosynthesis; CoA from (R)-pantothenate: step 4/5. Reversibly transfers an adenylyl group from ATP to 4'-phosphopantetheine, yielding dephospho-CoA (dPCoA) and pyrophosphate. In Klebsiella pneumoniae subsp. pneumoniae (strain ATCC 700721 / MGH 78578), this protein is Phosphopantetheine adenylyltransferase.